We begin with the raw amino-acid sequence, 906 residues long: Ribonucleoside-diphosphate reductase large subunit-like protein (906 aa).

Disordered stretches follow at residues 1-70 and 89-129; these read MNPA…AGNT and VSWR…LSTF. A compositionally biased stretch (polar residues) spans 98–109; the sequence is PDGTPSVLSLTR.

The protein belongs to the ribonucleoside diphosphate reductase large chain family.

It localises to the virion. Its subcellular location is the host cytoplasm. Does not possess a ribonucleotide reductase activity. Betaherpesviruses probably use another strategy to expand the dNTP pool in a quiescent host cell. This Homo sapiens (Human) protein is Ribonucleoside-diphosphate reductase large subunit-like protein.